The primary structure comprises 1353 residues: Stress response protein NST1 (1353 aa).

Over residues 1 to 12 (MSSKSQQPPTGL) the composition is skewed to polar residues. 9 disordered regions span residues 1-66 (MSSK…FFNF), 216-422 (NANA…TQSS), 503-522 (NGLR…VEVD), 531-618 (DHRA…SFGS), 652-694 (RRSV…AEEG), 727-882 (LREL…AKET), 979-1119 (GLKS…DDAF), 1140-1276 (GSLI…GAGV), and 1308-1337 (GGTA…HQQQ). A compositionally biased stretch (basic residues) spans 16 to 25 (AAKKRAKKAA). A compositionally biased stretch (low complexity) spans 26–45 (KQSQNPQPQSAPQTSSQTPA). Residues 46–59 (SVPPLPPASVPDPL) show a composition bias toward pro residues. The segment covering 218 to 229 (NARSFPSPQQTI) has biased composition (polar residues). Residues 242-254 (REEEYDDEEEIEE) are compositionally biased toward acidic residues. The span at 268–277 (KKNKKKKKKG) shows a compositional bias: basic residues. Residues 287–300 (VEPPAPLPPLPPPS) show a composition bias toward pro residues. Positions 317-330 (LPTHQPQPLSQQPP) are enriched in low complexity. Residues 331-349 (SLNPLPPPAPASAPTPTPP) are compositionally biased toward pro residues. The span at 368–388 (PARSARAAGKAPASAAPPHNA) shows a compositional bias: low complexity. A compositionally biased stretch (basic and acidic residues) spans 531 to 541 (DHRAPELHDHD). The segment covering 542 to 583 (PDDLDGEESEEYDDDDDYADDDELDDDDIGTDEADVGDEIDE) has biased composition (acidic residues). Basic and acidic residues predominate over residues 654 to 665 (SVREEQNLRDMQ). The span at 666–681 (EETDEEEEEEDDDESR) shows a compositional bias: acidic residues. 3 stretches are compositionally biased toward basic and acidic residues: residues 682–694 (DEPM…AEEG), 727–750 (LREL…EAQK), and 760–882 (QKAE…AKET). Residues 713 to 944 (AYRERVAKQR…AAQQAQRERA (232 aa)) are a coiled coil. Residues 1009–1021 (TNATPGRSMQKTP) show a composition bias toward polar residues. Over residues 1154 to 1165 (PTPPAPIAPPNL) the composition is skewed to pro residues. 2 stretches are compositionally biased toward polar residues: residues 1174–1187 (SDGQ…LRST) and 1209–1220 (QPQQRRPTTSWD).

The protein belongs to the NST1 family.

Its subcellular location is the cytoplasm. In terms of biological role, may act as a negative regulator of salt tolerance. This Cryptococcus neoformans var. neoformans serotype D (strain B-3501A) (Filobasidiella neoformans) protein is Stress response protein NST1 (NST1).